The following is a 127-amino-acid chain: Ribosome-binding factor A (127 aa).

This sequence belongs to the RbfA family. As to quaternary structure, monomer. Binds 30S ribosomal subunits, but not 50S ribosomal subunits or 70S ribosomes.

It is found in the cytoplasm. One of several proteins that assist in the late maturation steps of the functional core of the 30S ribosomal subunit. Associates with free 30S ribosomal subunits (but not with 30S subunits that are part of 70S ribosomes or polysomes). Required for efficient processing of 16S rRNA. May interact with the 5'-terminal helix region of 16S rRNA. This chain is Ribosome-binding factor A, found in Chloroflexus aurantiacus (strain ATCC 29366 / DSM 635 / J-10-fl).